The chain runs to 328 residues: DNA polymerase III subunit delta' (328 aa).

As to quaternary structure, DNA polymerase III contains a core (composed of alpha, epsilon and theta chains) that associates with a tau subunit. This core dimerizes to form the POLIII' complex. PolIII' associates with the gamma complex (composed of gamma, delta, delta', psi and chi chains) and with the beta chain to form the complete DNA polymerase III complex.

It carries out the reaction DNA(n) + a 2'-deoxyribonucleoside 5'-triphosphate = DNA(n+1) + diphosphate. Its function is as follows. DNA polymerase III is a complex, multichain enzyme responsible for most of the replicative synthesis in bacteria. This DNA polymerase also exhibits 3' to 5' exonuclease activity. The polypeptide is DNA polymerase III subunit delta' (holB) (Pseudomonas aeruginosa (strain ATCC 15692 / DSM 22644 / CIP 104116 / JCM 14847 / LMG 12228 / 1C / PRS 101 / PAO1)).